The sequence spans 397 residues: Putative 8-amino-7-oxononanoate synthase (397 aa).

R22 serves as a coordination point for substrate. A pyridoxal 5'-phosphate-binding site is contributed by 109–110; that stretch reads GW. H139 contacts substrate. Residues S187, 212–215, and 241–244 each bind pyridoxal 5'-phosphate; these read DEAH and TFSK. Residue K244 is modified to N6-(pyridoxal phosphate)lysine. T358 is a binding site for substrate.

Belongs to the class-II pyridoxal-phosphate-dependent aminotransferase family. BioF subfamily. Homodimer. Requires pyridoxal 5'-phosphate as cofactor.

It catalyses the reaction 6-carboxyhexanoyl-[ACP] + L-alanine + H(+) = (8S)-8-amino-7-oxononanoate + holo-[ACP] + CO2. It functions in the pathway cofactor biosynthesis; biotin biosynthesis. In terms of biological role, catalyzes the decarboxylative condensation of pimeloyl-[acyl-carrier protein] and L-alanine to produce 8-amino-7-oxononanoate (AON), [acyl-carrier protein], and carbon dioxide. The polypeptide is Putative 8-amino-7-oxononanoate synthase (bioF) (Bordetella parapertussis (strain 12822 / ATCC BAA-587 / NCTC 13253)).